Here is a 926-residue protein sequence, read N- to C-terminus: Coatomer subunit beta'-2 (926 aa).

WD repeat units lie at residues 13–52 (QRSE…MAKS), 55–94 (VTEL…KVKV), 97–136 (AHSD…ACTQ), 140–180 (GHSH…PNFT), 183–224 (AHQK…CVQT), 227–266 (GHTH…LENT), 269–309 (YGLE…ASMD), 351–390 (TCDL…RSFG), and 461–501 (RIDV…SHFD). The disordered stretch occupies residues 847–926 (EEESLENGDM…GTNNEGNPSA (80 aa)). The span at 868–887 (NEQRNEDDVAEHVEEHHEEK) shows a compositional bias: basic and acidic residues. Over residues 888–900 (EAEEEEGIVDGDS) the composition is skewed to acidic residues. Polar residues predominate over residues 917-926 (GTNNEGNPSA).

It belongs to the WD repeat COPB2 family. As to quaternary structure, oligomeric complex that consists of at least the alpha, beta, beta', gamma, delta, epsilon and zeta subunits.

The protein localises to the cytoplasm. It localises to the golgi apparatus membrane. The protein resides in the cytoplasmic vesicle. It is found in the COPI-coated vesicle membrane. Functionally, the coatomer is a cytosolic protein complex that binds to dilysine motifs and reversibly associates with Golgi non-clathrin-coated vesicles, which further mediate biosynthetic protein transport from the ER, via the Golgi up to the trans Golgi network. Coatomer complex is required for budding from Golgi membranes, and is essential for the retrograde Golgi-to-ER transport of dilysine-tagged proteins. The protein is Coatomer subunit beta'-2 of Arabidopsis thaliana (Mouse-ear cress).